Reading from the N-terminus, the 380-residue chain is Queuine tRNA-ribosyltransferase (380 aa).

Asp95 functions as the Proton acceptor in the catalytic mechanism. Residues 95 to 99, Asp149, Gln192, and Gly219 contribute to the substrate site; that span reads DSGGF. Residues 250–256 form an RNA binding region; sequence GVGSPDA. Asp269 serves as the catalytic Nucleophile. Residues 274-278 form an RNA binding; important for wobble base 34 recognition region; that stretch reads TRIAR. Cys307, Cys309, Cys312, and His338 together coordinate Zn(2+).

Belongs to the queuine tRNA-ribosyltransferase family. As to quaternary structure, homodimer. Within each dimer, one monomer is responsible for RNA recognition and catalysis, while the other monomer binds to the replacement base PreQ1. Zn(2+) serves as cofactor.

It catalyses the reaction 7-aminomethyl-7-carbaguanine + guanosine(34) in tRNA = 7-aminomethyl-7-carbaguanosine(34) in tRNA + guanine. The protein operates within tRNA modification; tRNA-queuosine biosynthesis. In terms of biological role, catalyzes the base-exchange of a guanine (G) residue with the queuine precursor 7-aminomethyl-7-deazaguanine (PreQ1) at position 34 (anticodon wobble position) in tRNAs with GU(N) anticodons (tRNA-Asp, -Asn, -His and -Tyr). Catalysis occurs through a double-displacement mechanism. The nucleophile active site attacks the C1' of nucleotide 34 to detach the guanine base from the RNA, forming a covalent enzyme-RNA intermediate. The proton acceptor active site deprotonates the incoming PreQ1, allowing a nucleophilic attack on the C1' of the ribose to form the product. After dissociation, two additional enzymatic reactions on the tRNA convert PreQ1 to queuine (Q), resulting in the hypermodified nucleoside queuosine (7-(((4,5-cis-dihydroxy-2-cyclopenten-1-yl)amino)methyl)-7-deazaguanosine). This Pediococcus pentosaceus (strain ATCC 25745 / CCUG 21536 / LMG 10740 / 183-1w) protein is Queuine tRNA-ribosyltransferase.